The sequence spans 144 residues: Heme transporter hrg1-B (144 aa).

4 helical membrane-spanning segments follow: residues 6–26 (IYISVGYSTFGMLVGFSAFIV), 38–58 (AMGGLSGVLALWALVTHIMYI), 71–91 (FFMFVSSVFSLLAVAAFATFI), and 107–127 (FYLSAVWSFMTLKWAFLLGLY). Residues 140–141 (IL) carry the Di-leucine motif motif.

Belongs to the HRG family.

The protein localises to the endosome membrane. It localises to the lysosome membrane. Its subcellular location is the cytoplasmic vesicle. The protein resides in the phagosome membrane. It carries out the reaction heme b(in) = heme b(out). Its function is as follows. Heme transporter that regulates intracellular heme availability through the endosomal or lysosomal compartment. In macrophages, is the heme transporter for heme-iron recycling. Essential for macrophage iron homeostasis, transports heme from the phagolysosome to the cytoplasm during erythrophagocytosis (EP). The protein is Heme transporter hrg1-B (slc48a1a) of Danio rerio (Zebrafish).